The sequence spans 285 residues: MFKDFFNRTKKKKYLTVQDSKNKDVPAGIMTKCPKCKKIMYTKELAENLNVCFNCDHHIALTAYKRIEAISDEGSFTEFDKGMTSANPLDFPSYLEKIEKDQQKTGLKEAVVTGTAQLDGMKFGVAVMDSRFRMGSMGSVIGEKICRIIDYCTENRLPFILFSASGGARMQEGIISLMQMGKTSVSLKRHSDAGLLYISYLTHPTTGGVSASFASVGDINLSEPKALIGFAGRRVIEQTINEKLPDDFQTAEFLLEHGQLDKVVHRNDMRQTLSEILKIHQEVTK.

The 257-residue stretch at 29–285 folds into the CoA carboxyltransferase N-terminal domain; that stretch reads IMTKCPKCKK…ILKIHQEVTK (257 aa). Positions 33, 36, 52, and 55 each coordinate Zn(2+). A C4-type zinc finger spans residues 33–55; it reads CPKCKKIMYTKELAENLNVCFNC.

It belongs to the AccD/PCCB family. In terms of assembly, acetyl-CoA carboxylase is a heterohexamer composed of biotin carboxyl carrier protein (AccB), biotin carboxylase (AccC) and two subunits each of ACCase subunit alpha (AccA) and ACCase subunit beta (AccD). The cofactor is Zn(2+).

It is found in the cytoplasm. It carries out the reaction N(6)-carboxybiotinyl-L-lysyl-[protein] + acetyl-CoA = N(6)-biotinyl-L-lysyl-[protein] + malonyl-CoA. The protein operates within lipid metabolism; malonyl-CoA biosynthesis; malonyl-CoA from acetyl-CoA: step 1/1. Component of the acetyl coenzyme A carboxylase (ACC) complex. Biotin carboxylase (BC) catalyzes the carboxylation of biotin on its carrier protein (BCCP) and then the CO(2) group is transferred by the transcarboxylase to acetyl-CoA to form malonyl-CoA. This chain is Acetyl-coenzyme A carboxylase carboxyl transferase subunit beta, found in Staphylococcus aureus (strain Newman).